Reading from the N-terminus, the 90-residue chain is Small ribosomal subunit protein uS17 (90 aa).

The protein belongs to the universal ribosomal protein uS17 family. As to quaternary structure, part of the 30S ribosomal subunit.

One of the primary rRNA binding proteins, it binds specifically to the 5'-end of 16S ribosomal RNA. The chain is Small ribosomal subunit protein uS17 from Treponema denticola (strain ATCC 35405 / DSM 14222 / CIP 103919 / JCM 8153 / KCTC 15104).